Reading from the N-terminus, the 429-residue chain is MCPGALWVALPLLSLLAGSLQGKPLQSWGRGSAGGNAHSPLGVPGGGLPEHTFNLKMFLENVKVDFLRSLNLSGVPSQDKTRVEPPQYMIDLYNRYTSDKSTTPASNIVRSFSMEDAISITATEDFPFQKHILLFNISIPRHEQITRAELRLYVSCQNHVDPSHDLKGSVVIYDVLDGTDAWDSATETKTFLVSQDIQDEGWETLEVSSAVKRWVRSDSTKSKNKLEVTVESHRKGCDTLDISVPPGSRNLPFFVVFSNDHSSGTKETRLELREMISHEQESVLKKLSKDGSTEAGESSHEEDTDGHVAAGSTLARRKRSAGAGSHCQKTSLRVNFEDIGWDSWIIAPKEYEAYECKGGCFFPLADDVTPTKHAIVQTLVHLKFPTKVGKACCVPTKLSPISVLYKDDMGVPTLKYHYEGMSVAECGCR.

An N-terminal signal peptide occupies residues 1 to 22; it reads MCPGALWVALPLLSLLAGSLQG. Residues 23 to 319 constitute a propeptide that is removed on maturation; that stretch reads KPLQSWGRGS…AGSTLARRKR (297 aa). N-linked (GlcNAc...) asparagine glycosylation is found at Asn71 and Asn136. Positions 283-301 are enriched in basic and acidic residues; sequence VLKKLSKDGSTEAGESSHE. The interval 283-308 is disordered; sequence VLKKLSKDGSTEAGESSHEEDTDGHV. Disulfide bonds link Cys327–Cys393, Cys356–Cys426, and Cys360–Cys428. The interaction with ENG stretch occupies residues 402-416; that stretch reads SVLYKDDMGVPTLKY.

It belongs to the TGF-beta family. Homodimer; disulfide-linked. Detected in extracellular fluid as mature homodimer, and in complex with its propeptide. Interacts with ACVRL1, BMPR2 and ACVR2B with high affinity (in vitro). Identified in a complex with ACVRL1 and ACVR2B. Has ten times lower affinity for ACVR2A (in vitro). Interacts with ENG, forming a heterotetramer with a 2:2 stoichiometry. Can form a heteromeric complex with ENG and ACVRL1. Interacts with type I receptor ACVR1. A reversible disulfide bond can be formed between the two subunits in the homodimer; this has no effect on GDF2 activity. Detected in blood plasma (at protein level).

The protein resides in the secreted. Its function is as follows. Potent circulating inhibitor of angiogenesis. Signals through the type I activin receptor ACVRL1 but not other Alks. Signaling through SMAD1 in endothelial cells requires TGF-beta coreceptor endoglin/ENG. The protein is Growth/differentiation factor 2 (GDF2) of Homo sapiens (Human).